The following is a 215-amino-acid chain: NADH-quinone oxidoreductase subunit C (215 aa).

Belongs to the complex I 30 kDa subunit family. As to quaternary structure, NDH-1 is composed of 14 different subunits. Subunits NuoB, C, D, E, F, and G constitute the peripheral sector of the complex.

The protein resides in the cell inner membrane. It carries out the reaction a quinone + NADH + 5 H(+)(in) = a quinol + NAD(+) + 4 H(+)(out). Its function is as follows. NDH-1 shuttles electrons from NADH, via FMN and iron-sulfur (Fe-S) centers, to quinones in the respiratory chain. The immediate electron acceptor for the enzyme in this species is believed to be ubiquinone. Couples the redox reaction to proton translocation (for every two electrons transferred, four hydrogen ions are translocated across the cytoplasmic membrane), and thus conserves the redox energy in a proton gradient. This is NADH-quinone oxidoreductase subunit C from Methylobacterium radiotolerans (strain ATCC 27329 / DSM 1819 / JCM 2831 / NBRC 15690 / NCIMB 10815 / 0-1).